The chain runs to 327 residues: Ventral anterior homeobox 1 (327 aa).

A compositionally biased stretch (basic and acidic residues) spans 1 to 34 (MFGKQDKMDVRCSTETEANRVSKNGHKEGKDSKG). The disordered stretch occupies residues 1–41 (MFGKQDKMDVRCSTETEANRVSKNGHKEGKDSKGAEGNIST). A DNA-binding region (homeobox) is located at residues 99–158 (PKRTRTSFTAEQLYRLEMEFQRCQYVVGRERTELARQLNLSETQVKVWFQNRRTKQKKDQ). The span at 230-245 (APAGGSPHPPSAGTAA) shows a compositional bias: low complexity. Residues 230–249 (APAGGSPHPPSAGTAAGPPP) form a disordered region.

Belongs to the EMX homeobox family.

The protein resides in the nucleus. Transcription factor that plays a role in establishing dorsal-ventral polarity in the neural retina. The protein is Ventral anterior homeobox 1 (VAX1) of Gallus gallus (Chicken).